Reading from the N-terminus, the 272-residue chain is NH(3)-dependent NAD(+) synthetase (272 aa).

Residue 45–52 coordinates ATP; that stretch reads GISGGQDS. Position 51 (Asp-51) interacts with Mg(2+). A deamido-NAD(+)-binding site is contributed by Arg-138. An ATP-binding site is contributed by Thr-158. A Mg(2+)-binding site is contributed by Glu-163. Deamido-NAD(+) contacts are provided by Lys-171 and Asp-178. ATP is bound by residues Lys-187 and Thr-209. 258 to 259 provides a ligand contact to deamido-NAD(+); that stretch reads HK.

Belongs to the NAD synthetase family. Homodimer.

The enzyme catalyses deamido-NAD(+) + NH4(+) + ATP = AMP + diphosphate + NAD(+) + H(+). It participates in cofactor biosynthesis; NAD(+) biosynthesis; NAD(+) from deamido-NAD(+) (ammonia route): step 1/1. Its function is as follows. Catalyzes the ATP-dependent amidation of deamido-NAD to form NAD. Uses ammonia as a nitrogen source. The sequence is that of NH(3)-dependent NAD(+) synthetase from Bacillus cereus (strain Q1).